A 93-amino-acid chain; its full sequence is uncharacterized protein (93 aa).

The segment at 35 to 72 (KSVPPPTPPKPVKKTPSPTLPKPSKQKQEPQVEVNEDR) is disordered. Over residues 60–72 (QKQEPQVEVNEDR) the composition is skewed to basic and acidic residues.

This is an uncharacterized protein from Ostreid herpesvirus 1 (isolate France) (OsHV-1).